A 325-amino-acid chain; its full sequence is Intelectin (325 aa).

A signal peptide spans 1 to 23 (MKYCVLLIMIHLLLVELPQFPEA). In terms of domain architecture, Fibrinogen C-terminal spans 44-266 (IRSSYIGRSC…AAMAICSGVK (223 aa)). Cysteines 53 and 82 form a disulfide. Residues histidine 98, glutamate 99, asparagine 101, glycine 104, glycine 109, aspartate 110, aspartate 145, glutamate 274, glutamate 286, and aspartate 294 each contribute to the Ca(2+) site. 2 disulfides stabilise this stretch: cysteine 106/cysteine 292 and cysteine 262/cysteine 277. Residues 274–275 (EH) and glutamate 286 contribute to the a carbohydrate site.

Expressed at high levels in caudal kidney, liver, and swim bladder. Also expressed in gill, spleen, intestine and head kidney. Not detected in heart.

Its function is as follows. May be involved in innate immune surveillance. May specifically recognize carbohydrate chains of pathogens and bacterial components in a calcium-dependent manner. In vitro binds N-acetylglucosamine residues. The sequence is that of Intelectin from Oncorhynchus mykiss (Rainbow trout).